A 355-amino-acid chain; its full sequence is WD repeat domain phosphoinositide-interacting protein 4 (355 aa).

2 WD repeats span residues 2–40 (SQQRGVNGLRFNQDQSCFCCAMETGVRIFNIEPLMEKGH) and 185–225 (AHQS…QLVE). Positions 226–229 (LRRG) match the L/FRRG motif motif. Residues 230–269 (TDPATLYCINFSHDSSFLCSSSDKGTVHIFALKDTKLNRR) form a WD 3 repeat.

The protein belongs to the WD repeat PROPPIN family.

The protein localises to the preautophagosomal structure. Functionally, component of the autophagy machinery that controls the major intracellular degradation process by which cytoplasmic materials are packaged into autophagosomes and delivered to lysosomes for degradation. Binds phosphatidylinositol 3-phosphate (PtdIns3P). In Xenopus laevis (African clawed frog), this protein is WD repeat domain phosphoinositide-interacting protein 4 (wdr45).